The primary structure comprises 406 residues: Probable endo-xylogalacturonan hydrolase A (406 aa).

The first 18 residues, 1 to 18 (MISLNSIFLLSLVGLSRA), serve as a signal peptide directing secretion. Residues 20–49 (PSRSETSPDRTIKPRAACTPTAGGSSSTDD) form a disordered region. PbH1 repeat units follow at residues 183–213 (TSNAQFTSLTMDATSNSDNLPKNTDAFDIGA), 214–235 (STYVTISSVAITNDDDCVAFKP), 237–257 (ANYVTVENVSCTGSHGISVGS), 266–289 (VQNVYARNITMINSSKAAGIKTYP), 299–320 (VKNATFEDFIVDGCDYAFQIQS), and 368–390 (TCDVTISGFEVKAPSGDAKILCG). Asp228 (proton donor) is an active-site residue. N-linked (GlcNAc...) asparagine glycosylation occurs at Asn244. The active site involves His251. N-linked (GlcNAc...) asparagine glycans are attached at residues Asn273, Asn278, and Asn301.

Belongs to the glycosyl hydrolase 28 family.

It localises to the secreted. Pectinolytic enzyme involved in the degradation of xylogalacturonan (xga), a galacturonan backbone heavily substituted with xylose, and which is one important component of the hairy regions of pectin. Activity requires a galacturonic acid backbone substituted with xylose. The sequence is that of Probable endo-xylogalacturonan hydrolase A (xghA) from Aspergillus flavus (strain ATCC 200026 / FGSC A1120 / IAM 13836 / NRRL 3357 / JCM 12722 / SRRC 167).